Consider the following 76-residue polypeptide: Putative antitoxin VapB2 (76 aa).

It belongs to the UPF0330 family.

Possibly the antitoxin component of a type II toxin-antitoxin (TA) system. Its cognate toxin is VapC2 (Potential). The sequence is that of Putative antitoxin VapB2 (vapB2) from Pyrococcus abyssi (strain GE5 / Orsay).